An 81-amino-acid chain; its full sequence is Cytochrome c oxidase subunit 7A1, mitochondrial (81 aa).

The N-terminal 21 residues, 1–21 (MRHLLGLPQLASRAFSTTVRQ), are a transit peptide targeting the mitochondrion. A helical transmembrane segment spans residues 51 to 72 (ILYRLTMTLTVVGTGYSLYWLL).

Belongs to the cytochrome c oxidase VIIa family. As to quaternary structure, component of the complex IV (CIV, cytochrome c oxidase). The complex exists as a monomer or a dimer and forms supercomplexes (SCs) in the inner mitochondrial membrane with NADH-ubiquinone oxidoreductase (complex I, CI) and ubiquinol-cytochrome c oxidoreductase (cytochrome b-c1 complex, complex III, CIII), resulting in different assemblies (supercomplex SCI(1)III(2)IV(1) and megacomplex MCI(2)III(2)IV(2)).

It is found in the mitochondrion inner membrane. The protein operates within energy metabolism; oxidative phosphorylation. In terms of biological role, component of the mitochondrial respiratory complex IV (CIV, also named cytochrome c oxidase complex), the last enzyme in the mitochondrial electron transport chain which drives oxidative phosphorylation. The CIV complex is the component of the respiratory chain that catalyzes the reduction of oxygen to water. Acts as an assembly factor that specifically drives the homodimerization of CIV complexes, mediating the formation of mitochondrial respiratory supercomplexes (respirasomes) containing two CIV: supercomplxes with two molecules of CIV show improved activity. This Danio rerio (Zebrafish) protein is Cytochrome c oxidase subunit 7A1, mitochondrial.